A 232-amino-acid chain; its full sequence is Uracil-DNA glycosylase (232 aa).

The Proton acceptor role is filled by aspartate 64.

Belongs to the uracil-DNA glycosylase (UDG) superfamily. UNG family.

It is found in the cytoplasm. The catalysed reaction is Hydrolyzes single-stranded DNA or mismatched double-stranded DNA and polynucleotides, releasing free uracil.. Its function is as follows. Excises uracil residues from the DNA which can arise as a result of misincorporation of dUMP residues by DNA polymerase or due to deamination of cytosine. This is Uracil-DNA glycosylase from Shouchella clausii (strain KSM-K16) (Alkalihalobacillus clausii).